The following is a 307-amino-acid chain: MSESAPAGSKEGVSFGNLPRPEPRTSKDQQKLSISTDVKKPSHSAPVTPVRSARSSMEQPTFRPVAKNSVTVAPARAAGFCPPQFEEYHHGRSHSLVSPPPSPHFLKRISFDTFNNKAATDFSLTLKTQHQAYKWTRTSRTFLCGMDGNSYSEVAVDWLFETLLADNDEAVVLRVIDPSSKLAEDLSDEQSYRSLAEHIMAGILKKVDDDKAVSIIVELVVGKPQDMILRTIHVYSPDSLIVGTRGKALNSFQSLLSSGSVSKFCLQKSPIPVIVVRPDRKRVRSKNKRLKDKTRKSYMEILEKSGR.

Residues 1 to 63 (MSESAPAGSK…RSSMEQPTFR (63 aa)) are disordered. Over residues 21 to 30 (PEPRTSKDQQ) the composition is skewed to basic and acidic residues. The residue at position 44 (serine 44) is a Phosphoserine. Residue threonine 48 is modified to Phosphothreonine. 2 positions are modified to phosphoserine: serine 98 and serine 102.

This sequence belongs to the universal stress protein A family.

It is found in the barrier septum. It localises to the cell tip. This Schizosaccharomyces pombe (strain 972 / ATCC 24843) (Fission yeast) protein is Universal stress protein A family protein C25B2.10.